A 343-amino-acid chain; its full sequence is Endoglucanase C (343 aa).

Residue glutamate 140 is the Proton donor of the active site. Residue glutamate 280 is the Nucleophile of the active site.

The protein belongs to the glycosyl hydrolase 5 (cellulase A) family.

The catalysed reaction is Endohydrolysis of (1-&gt;4)-beta-D-glucosidic linkages in cellulose, lichenin and cereal beta-D-glucans.. The protein operates within glycan metabolism; cellulose degradation. This enzyme catalyzes the endohydrolysis of 1,4-beta-glucosidic linkages in cellulose, lichenin and cereal beta-D-glucans. The sequence is that of Endoglucanase C (celC) from Acetivibrio thermocellus (strain ATCC 27405 / DSM 1237 / JCM 9322 / NBRC 103400 / NCIMB 10682 / NRRL B-4536 / VPI 7372) (Clostridium thermocellum).